A 281-amino-acid chain; its full sequence is Large ribosomal subunit protein uL2 (281 aa).

The tract at residues 222–281 is disordered; the sequence is TVRGSVMNPNDHPHGGGEGRTPIGRKSPVTPWGKKALGVKTRNTKKPSEKLIVRKRNAKK.

Belongs to the universal ribosomal protein uL2 family. In terms of assembly, part of the 50S ribosomal subunit. Forms a bridge to the 30S subunit in the 70S ribosome.

Functionally, one of the primary rRNA binding proteins. Required for association of the 30S and 50S subunits to form the 70S ribosome, for tRNA binding and peptide bond formation. It has been suggested to have peptidyltransferase activity; this is somewhat controversial. Makes several contacts with the 16S rRNA in the 70S ribosome. The polypeptide is Large ribosomal subunit protein uL2 (Mesoplasma florum (strain ATCC 33453 / NBRC 100688 / NCTC 11704 / L1) (Acholeplasma florum)).